Reading from the N-terminus, the 359-residue chain is Probable 2-oxoacid dependent dioxygenase (359 aa).

Residues 207 to 308 (KGLWMLCHCF…ISVACFFVHT (102 aa)) form the Fe2OG dioxygenase domain. Fe cation-binding residues include His231, Asp233, and His287. The tract at residues 329 to 359 (PPKYRDTTSESSNHYVARKPNGNSSLDHLRI) is disordered. The segment covering 349–359 (NGNSSLDHLRI) has biased composition (polar residues).

It belongs to the iron/ascorbate-dependent oxidoreductase family. It depends on Fe(2+) as a cofactor. In terms of tissue distribution, expressed in leaves and seeds. All cultivars with seed-only-functional allele have low to non-detectable GSL-OH expression in the leaves.

It catalyses the reaction gluconapin + AH2 + O2 = progoitrin + A + H2O. Necessary for the hydroxylation of but-3-enyl glucosinolate to 2-hydroxybut-3-enyl glucosinolate, which is toxic to insects, bacteria and nematodes, inhibits seed germination and produces bitter flavors. This Arabidopsis thaliana (Mouse-ear cress) protein is Probable 2-oxoacid dependent dioxygenase.